A 213-amino-acid polypeptide reads, in one-letter code: Octanoyltransferase (213 aa).

The BPL/LPL catalytic domain occupies 32–207 (ESTLDEIWLV…NILALLNNPD (176 aa)). Substrate is bound by residues 71–78 (RGGQVTYH), 138–140 (SLG), and 151–153 (GLA). The active-site Acyl-thioester intermediate is the Cys169.

The protein belongs to the LipB family.

The protein localises to the cytoplasm. The enzyme catalyses octanoyl-[ACP] + L-lysyl-[protein] = N(6)-octanoyl-L-lysyl-[protein] + holo-[ACP] + H(+). Its pathway is protein modification; protein lipoylation via endogenous pathway; protein N(6)-(lipoyl)lysine from octanoyl-[acyl-carrier-protein]: step 1/2. In terms of biological role, catalyzes the transfer of endogenously produced octanoic acid from octanoyl-acyl-carrier-protein onto the lipoyl domains of lipoate-dependent enzymes. Lipoyl-ACP can also act as a substrate although octanoyl-ACP is likely to be the physiological substrate. In Escherichia coli O17:K52:H18 (strain UMN026 / ExPEC), this protein is Octanoyltransferase.